Here is a 29-residue protein sequence, read N- to C-terminus: Cyclotide vibi-B (29 aa).

The segment at residues 1 to 29 (GLPVCGETCFGGTCNTPGCTCSYPICTRN) is a cross-link (cyclopeptide (Gly-Asn)). Intrachain disulfides connect Cys5–Cys19, Cys9–Cys21, and Cys14–Cys26.

In terms of processing, this is a cyclic peptide.

Its function is as follows. Probably participates in a plant defense mechanism. The polypeptide is Cyclotide vibi-B (Viola biflora (Yellow wood violet)).